The primary structure comprises 96 residues: Small ribosomal subunit protein bS20 (96 aa).

Residues 1–27 (MAKQEVAAKKVKRPTALKRDLQNKKKR) are disordered.

It belongs to the bacterial ribosomal protein bS20 family.

Binds directly to 16S ribosomal RNA. This is Small ribosomal subunit protein bS20 from Protochlamydia amoebophila (strain UWE25).